The following is a 75-amino-acid chain: DNA-directed RNA polymerase subunit omega (75 aa).

It belongs to the RNA polymerase subunit omega family. In terms of assembly, the RNAP catalytic core consists of 2 alpha, 1 beta, 1 beta' and 1 omega subunit. When a sigma factor is associated with the core the holoenzyme is formed, which can initiate transcription.

The catalysed reaction is RNA(n) + a ribonucleoside 5'-triphosphate = RNA(n+1) + diphosphate. Functionally, promotes RNA polymerase assembly. Latches the N- and C-terminal regions of the beta' subunit thereby facilitating its interaction with the beta and alpha subunits. This chain is DNA-directed RNA polymerase subunit omega, found in Thermosipho melanesiensis (strain DSM 12029 / CIP 104789 / BI429).